The sequence spans 312 residues: MFEHETVLKWESIKGLNIKPDGIYVDCTLGGAGHSEEIVKQLTTGHLYAFDQDDVALAHAAERLAAYEGRFTLIKSNFVHLKEELEARSVTKVDGILFDLGVSSPQLDEGERGFSYNFDARLDMRMDQTSPLSAYEVVNEWPYNDLVRILFTYGEEKFSKQIARKIEKAREIAPIETTFELVELIKDAIPAPARRKGGHPAKRTFQAIRIAVNDELNVFDRAVYQAIDLLAVGGRLCVITFHSLEDRMCKQAFKEKSSLPELPQGLPMIPKEFEPELRLVTRKPITAGDDELDDNRRSRSAKLRIVEKMKES.

S-adenosyl-L-methionine contacts are provided by residues 32–34 (AGH), Asp51, Phe78, Asp99, and Gln106.

It belongs to the methyltransferase superfamily. RsmH family.

It is found in the cytoplasm. It catalyses the reaction cytidine(1402) in 16S rRNA + S-adenosyl-L-methionine = N(4)-methylcytidine(1402) in 16S rRNA + S-adenosyl-L-homocysteine + H(+). Its function is as follows. Specifically methylates the N4 position of cytidine in position 1402 (C1402) of 16S rRNA. This Exiguobacterium sibiricum (strain DSM 17290 / CCUG 55495 / CIP 109462 / JCM 13490 / 255-15) protein is Ribosomal RNA small subunit methyltransferase H.